The following is a 438-amino-acid chain: Ribosomal protein uS12 methylthiotransferase RimO (438 aa).

Residues 4–120 (HSLFLLSLGC…ILASLGARYR (117 aa)) form the MTTase N-terminal domain. [4Fe-4S] cluster-binding residues include C13, C49, C83, C144, C148, and C151. A Radical SAM core domain is found at 130-359 (LTPSHYAYLK…MELQEAVAES (230 aa)). The TRAM domain maps to 362–429 (REFEGKEIEV…AHELYGEIVQ (68 aa)).

Belongs to the methylthiotransferase family. RimO subfamily. [4Fe-4S] cluster is required as a cofactor.

It localises to the cytoplasm. The catalysed reaction is L-aspartate(89)-[ribosomal protein uS12]-hydrogen + (sulfur carrier)-SH + AH2 + 2 S-adenosyl-L-methionine = 3-methylsulfanyl-L-aspartate(89)-[ribosomal protein uS12]-hydrogen + (sulfur carrier)-H + 5'-deoxyadenosine + L-methionine + A + S-adenosyl-L-homocysteine + 2 H(+). In terms of biological role, catalyzes the methylthiolation of an aspartic acid residue of ribosomal protein uS12. The chain is Ribosomal protein uS12 methylthiotransferase RimO from Chlorobium chlorochromatii (strain CaD3).